Here is a 725-residue protein sequence, read N- to C-terminus: Phosphatase and actin regulator 4A (725 aa).

The span at 1-12 shows a compositional bias: polar residues; it reads MGQGASTQTLNP. Residues 1–597 form a disordered region; the sequence is MGQGASTQTL…SSTWNNKEQW (597 aa). Residues 55–64 show a composition bias toward basic residues; that stretch reads KPWKWRKKKT. 3 stretches are compositionally biased toward basic and acidic residues: residues 65–100, 124–147, and 155–164; these read SDKF…KDIP, GDRK…GERK, and KRNDGTERMT. The stretch at 75–100 is one RPEL 1 repeat; it reads LVLERKMSVRKPREELIERGLLKDIP. Residues 166–177 show a composition bias toward polar residues; it reads MIQSFQKMSLMQ. A compositionally biased stretch (low complexity) spans 212-221; it reads VIAAPSSAEP. Over residues 222-235 the composition is skewed to pro residues; that stretch reads APVPPPPIAKPPPR. 2 stretches are compositionally biased toward low complexity: residues 265–276 and 292–313; these read PAHTTPATVSTH and PAHV…LLKQ. The segment covering 359–368 has biased composition (polar residues); the sequence is TPVTKRNSGD. Residues 374–384 are compositionally biased toward pro residues; the sequence is PEPPPPAPTSV. Over residues 385 to 401 the composition is skewed to low complexity; it reads PIPAAAPISAPPSTQSD. Over residues 402-417 the composition is skewed to pro residues; it reads PPSPTTEPPSQPPPLP. Basic and acidic residues predominate over residues 497–510; it reads QKPELEPRSRRGLV. 2 stretches are compositionally biased toward acidic residues: residues 522–536 and 545–554; these read AGSE…ESDS and DNEEDDDEED. Residues 567 to 585 are compositionally biased toward basic and acidic residues; sequence KDTLALKLERQQEKEKSQE. RPEL repeat units follow at residues 606–631 and 644–669; these read TALT…LAKN and RRLT…RFHE.

The protein belongs to the phosphatase and actin regulator family. As to quaternary structure, binds ppp1ca and actin.

It localises to the cytoplasm. The protein localises to the cell projection. Its subcellular location is the lamellipodium. In terms of biological role, regulator of protein phosphatase 1 (PP1) required for neural tube and optic fissure closure, and enteric neural crest cell (ENCCs) migration during development. Acts as an activator of PP1. During neural tube closure, localizes to the ventral neural tube and activates PP1, leading to down-regulate cell proliferation within cranial neural tissue and the neural retina. Also acts as a regulator of migration of enteric neural crest cells (ENCCs) by activating PP1, leading to repression of the integrin signaling through the rho/rock pathway. This Danio rerio (Zebrafish) protein is Phosphatase and actin regulator 4A (phactr4a).